Reading from the N-terminus, the 35-residue chain is U14-ctenitoxin-Pn1a (35 aa).

Disulfide bonds link cysteine 3-cysteine 17, cysteine 10-cysteine 22, and cysteine 16-cysteine 32.

In terms of tissue distribution, expressed by the venom gland.

Its subcellular location is the secreted. Functionally, neurotoxin. This is U14-ctenitoxin-Pn1a from Phoneutria nigriventer (Brazilian armed spider).